A 338-amino-acid chain; its full sequence is Ornithine carbamoyltransferase (338 aa).

Carbamoyl phosphate contacts are provided by residues Arg-116 and 143-146; that span reads HPCQ. Residues Asn-174, Asp-235, and 239–240 contribute to the L-ornithine site; that span reads SM. Carbamoyl phosphate-binding residues include Cys-275 and Arg-303.

This sequence belongs to the aspartate/ornithine carbamoyltransferase superfamily. OTCase family.

It localises to the cytoplasm. It carries out the reaction carbamoyl phosphate + L-ornithine = L-citrulline + phosphate + H(+). It functions in the pathway amino-acid biosynthesis; L-arginine biosynthesis; L-arginine from L-ornithine and carbamoyl phosphate: step 1/3. Functionally, reversibly catalyzes the transfer of the carbamoyl group from carbamoyl phosphate (CP) to the N(epsilon) atom of ornithine (ORN) to produce L-citrulline. This Chlorobaculum tepidum (strain ATCC 49652 / DSM 12025 / NBRC 103806 / TLS) (Chlorobium tepidum) protein is Ornithine carbamoyltransferase.